Reading from the N-terminus, the 202-residue chain is Transmembrane gamma-carboxyglutamic acid protein 2 (202 aa).

The signal sequence occupies residues 1–23; the sequence is MRGHPSLLLLYMALTTCLDTSPS. A propeptide spanning residues 24-49 is cleaved from the precursor; sequence EETDQEVFLGPPEAQSFLSSHTRIPR. In terms of domain architecture, Gla spans 50 to 96; it reads ANHWDLELLTPGNLERECLEERCSWEEAREYFEDNTLTERFWESYIY. Residues 50 to 109 lie on the Extracellular side of the membrane; that stretch reads ANHWDLELLTPGNLERECLEERCSWEEAREYFEDNTLTERFWESYIYNGKGGRGRVDVAS. Residues C67 and C72 are joined by a disulfide bond. The residue at position 70 (E70) is a 4-carboxyglutamate. A helical transmembrane segment spans residues 110–130; it reads LAVGLTGGILLIVLAGLGAFW. Topologically, residues 131–202 are cytoplasmic; it reads YLRWRQHRGQ…PPYTSLRRPH (72 aa). Residues 143–202 are disordered; that stretch reads CPQEAGLISPLSPLNPLGPPTPLPPPPPPPPGLPTYEQALAASGVHDAPPPPYTSLRRPH. Positions 158-175 are enriched in pro residues; sequence PLGPPTPLPPPPPPPPGL. The LPXY motif; mediates binding to WW domain-containing proteins motif lies at 175 to 178; that stretch reads LPTY. Residues 192-195 carry the PPXY motif; mediates binding to WW domain-containing proteins motif; it reads PPPY.

As to quaternary structure, interacts with NEDD4. Interacts (via cytoplasmic domain) with transcriptional coactivator YAP1. Gamma-carboxyglutamate residues are formed by vitamin K dependent carboxylation. These residues are essential for the binding of calcium. Widely expressed with highest levels in kidney. Also highly expressed in the thyroid.

The protein resides in the cell membrane. The chain is Transmembrane gamma-carboxyglutamic acid protein 2 from Homo sapiens (Human).